The primary structure comprises 143 residues: Large ribosomal subunit protein uL11 (143 aa).

It belongs to the universal ribosomal protein uL11 family. As to quaternary structure, part of the ribosomal stalk of the 50S ribosomal subunit. Interacts with L10 and the large rRNA to form the base of the stalk. L10 forms an elongated spine to which L12 dimers bind in a sequential fashion forming a multimeric L10(L12)X complex. Post-translationally, one or more lysine residues are methylated.

Its function is as follows. Forms part of the ribosomal stalk which helps the ribosome interact with GTP-bound translation factors. The polypeptide is Large ribosomal subunit protein uL11 (Novosphingobium aromaticivorans (strain ATCC 700278 / DSM 12444 / CCUG 56034 / CIP 105152 / NBRC 16084 / F199)).